The primary structure comprises 140 residues: Nucleoside diphosphate kinase (140 aa).

The ATP site is built by lysine 11, phenylalanine 59, arginine 87, threonine 93, arginine 104, and asparagine 114. The active-site Pros-phosphohistidine intermediate is histidine 117.

Belongs to the NDK family. As to quaternary structure, homotetramer. It depends on Mg(2+) as a cofactor.

Its subcellular location is the cytoplasm. The enzyme catalyses a 2'-deoxyribonucleoside 5'-diphosphate + ATP = a 2'-deoxyribonucleoside 5'-triphosphate + ADP. It catalyses the reaction a ribonucleoside 5'-diphosphate + ATP = a ribonucleoside 5'-triphosphate + ADP. Functionally, major role in the synthesis of nucleoside triphosphates other than ATP. The ATP gamma phosphate is transferred to the NDP beta phosphate via a ping-pong mechanism, using a phosphorylated active-site intermediate. This is Nucleoside diphosphate kinase from Erythrobacter litoralis (strain HTCC2594).